Reading from the N-terminus, the 393-residue chain is Putative odorant receptor 69a, isoform A (393 aa).

The Cytoplasmic portion of the chain corresponds to 1 to 39 (MQLHDHMKYIDLGCKMACIPRYQWKGRPTERQFYASEQR). The chain crosses the membrane as a helical span at residues 40–60 (IVFLLGTICQIFQITGVLIYW). At 61–76 (YCNGRLATETGTFVAQ) the chain is on the extracellular side. A helical membrane pass occupies residues 77–97 (LSEMCSSFCLTFVGFCNVYAI). At 98 to 139 (STNRNQIETLLEELHQIYPRYRKNHYRCQHYFDMAMTIMRIE) the chain is on the cytoplasmic side. Residues 140 to 160 (FLFYMILYVYYNSAPLWVLLW) form a helical membrane-spanning segment. Residues 161-189 (EHLHEEYDLSFKTQTNTWFPWKVHGSALG) are Extracellular-facing. A helical membrane pass occupies residues 190-210 (FGMAVLSITVGSFVGVGFSIV). Residues 211-269 (TQNLICLLTFQLKLHYDGISSQLVSLDCRRPGAHKELSILIAHHSRILQLGDQVNDIMN) lie on the Cytoplasmic side of the membrane. The chain crosses the membrane as a helical span at residues 270 to 290 (FVFGSSLVGATIAICMSSVSI). Residues 291 to 304 (MLLDLASAFKYASG) lie on the Extracellular side of the membrane. A helical transmembrane segment spans residues 305 to 325 (LVAFVLYNFVICYMGTEVTLA). Residues 326–365 (SGKVLPAAFYNNWYEGDLVYRRMLLILMMRATKPYMWKTY) are Cytoplasmic-facing. The chain crosses the membrane as a helical span at residues 366-386 (KLAPVSITTYMATLKFSYQMF). Topologically, residues 387–393 (TCVRSLK) are extracellular.

Belongs to the insect chemoreceptor superfamily. Heteromeric odorant receptor channel (TC 1.A.69) family. Or49a subfamily. In terms of assembly, interacts with Orco. Complexes exist early in the endomembrane system in olfactory sensory neurons (OSNs), coupling these complexes to the conserved ciliary trafficking pathway. In terms of tissue distribution, expressed in olfactory sensory neurons in the antenna.

Its subcellular location is the cell membrane. Its function is as follows. Odorant receptor which mediates acceptance or avoidance behavior, depending on its substrates. The odorant receptor repertoire encodes a large collection of odor stimuli that vary widely in identity, intensity, and duration. May form a complex with Orco to form odorant-sensing units, providing sensitive and prolonged odorant signaling and calcium permeability. The chain is Putative odorant receptor 69a, isoform A (Or69a) from Drosophila melanogaster (Fruit fly).